The chain runs to 208 residues: Putative proteasome subunit alpha type-4-B (208 aa).

Belongs to the peptidase T1A family. Component of the 20S core complex of the 26S proteasome. The 26S proteasome is composed of a core protease (CP), known as the 20S proteasome, capped at one or both ends by the 19S regulatory particle (RP/PA700). The 20S proteasome core is composed of 28 subunits that are arranged in four stacked rings, resulting in a barrel-shaped structure. The two end rings are each formed by seven alpha subunits, and the two central rings are each formed by seven beta subunits. The catalytic chamber with the active sites is on the inside of the barrel.

It is found in the cytoplasm. Its subcellular location is the nucleus. Its function is as follows. The proteasome is a multicatalytic proteinase complex which is characterized by its ability to cleave peptides with Arg, Phe, Tyr, Leu, and Glu adjacent to the leaving group at neutral or slightly basic pH. The proteasome has an ATP-dependent proteolytic activity. This is Putative proteasome subunit alpha type-4-B (PAC2) from Arabidopsis thaliana (Mouse-ear cress).